Consider the following 310-residue polypeptide: HTH-type transcriptional activator TtdR (310 aa).

An HTH lysR-type domain is found at 6–63 (PLAKDLQVLVEIVHSGSFSAAAATLGQTPAFVTKRIQILENTLATTLLNRSARGVALT). A DNA-binding region (H-T-H motif) is located at residues 23 to 42 (FSAAAATLGQTPAFVTKRIQ).

Belongs to the LysR transcriptional regulatory family.

In terms of biological role, positive regulator required for L-tartrate-dependent anaerobic growth on glycerol. Induces expression of the ttdA-ttdB-ygjE operon. The protein is HTH-type transcriptional activator TtdR (ttdR) of Escherichia coli (strain K12).